The chain runs to 444 residues: MSAPTQTTPVFKALTEASFSDSSLSEEAKQNALYWWNTSANDLARMLHQADYSEEVQRGFLSYYRDNICPRLGGKPDKDSADSGVGWDGNPLEYSFELKGSTKKKSVRFVVDLTELRPADHSNPLSMKHTQEMVDLLAEKTPNFDDTWYKVLKNWFVYAHLTPEEQTALIAKAGQQTSVIIGFDIYPKLTSPDQLPVMGKVYFPPCYVASDKGISRWQAVRQGIQSLPGVESFPNILSSTEIINDYLSEKPDSWQMGTRYLATDLVSPNKARFKVYMRCFDTSFEGIWDYYTLGGRIPNLDEDREKFRQLMDLVSGTTYAETRSKDDMQMGRFTSATGKLTAIYFNISPDNPYPAPKLCIYPSNFAKDDEVIAKGLDEWLEKYGWSDDTKSMEDQVKSVFDHRKLEETTGIFTFIGIGRKEDPTKKELSIQVYMTPELYRTPRY.

It belongs to the tryptophan dimethylallyltransferase family.

The catalysed reaction is 2,3,4,7,9-pentahydroxy-6-methyl-1H-phenalen-1-one + dimethylallyl diphosphate = 2,4,7,9-tetrahydroxy-6-methyl-8-(2-methylbut-3-en-2-yl)-1-oxo-1H-phenalen-3-ol + diphosphate. It functions in the pathway secondary metabolite biosynthesis. Functionally, prenyltransferase; part of the gene cluster that mediates the biosynthesis of phenalenones such as herqueinone, compounds that have been reported to treat tumors, bacterial infections and/or mycoses, and rheumatic diseases. The non-reducing polyketide synthase phnA synthesizes the heptaketide backbone and cyclizes it into the angular, hemiketal-containing naphtho-gamma-pyrone prephenalenone. The product template (PT) domain of phnA catalyzes only the C4-C9 aldol condensation, which is unprecedented among known PT domains. The transformation of prephenalenone to phenalenones requires an FAD-dependent monooxygenase phnB, which catalyzes the C2 aromatic hydroxylation of prephenalenone and ring opening of the gamma-pyrone ring simultaneously. Subsequent intramolecular deprotonation of C3 phenolic oxygen accelerates phenalenone ring closure to yield the tricyclic phenalenone core with a C2 hydroxylation. The prenyltransferase phnF further catalyzes reverse C-prenylation of phenalenone by direct electrophilic substitution at C6, or possibly via first a forward O-prenylation of a neighboring phenol in phenalenone, followed by a Claisen rearrangement. The hydroalkoxylation enzyme phnH catalyzes the 5-exo-trig cyclization via acid catalysis after the spontaneous deprotonation of 7-OH, which leads to the formation of the dihydrobenzofuran atrovenetin. Atrovenetin is further converted to deoxyherqueinone by the O-methyltransferase phnC which can methylate C2-OH to stabilize the northern portion of the phenalenone core. Finally, the oxidoreductase phnG converts deoxyherqueinone to herqueinone via C6 hydroxylation. This is Prenyltransferase phnF from Penicillium herquei.